The following is a 1141-amino-acid chain: PR domain zinc finger protein 15 (1141 aa).

Residues 49–159 (PNLEIRRLED…PGTELRVWYA (111 aa)) form the SET domain. A C2H2-type 1 zinc finger spans residues 197–219 (WACKVCSATFLELQLLNEHLLGH). A disordered region spans residues 224-283 (KSLPPGSQSEAAAPEKEQDTPRGEPPAVPESENVATKEQKKKPRRGRKPKVSKAEQPLVI). A compositionally biased stretch (basic and acidic residues) spans 236–245 (APEKEQDTPR). The segment covering 262–274 (QKKKPRRGRKPKV) has biased composition (basic residues). C2H2-type zinc fingers lie at residues 372 to 394 (YQCN…VRSH), 399 to 422 (FKCE…SYKH), 460 to 482 (FQCE…KKKH), and 487 to 509 (FACE…QRRH). Lysine 517 is covalently cross-linked (Glycyl lysine isopeptide (Lys-Gly) (interchain with G-Cter in SUMO2)). C2H2-type zinc fingers lie at residues 536-558 (SGCP…LLTH) and 563-585 (YTCE…IHVH). A disordered region spans residues 604-623 (IGISSEENDDNSDESADSEP). Over residues 609–620 (EENDDNSDESAD) the composition is skewed to acidic residues. 9 consecutive C2H2-type zinc fingers follow at residues 626 to 649 (YSCK…MEVH), 654 to 676 (YGCS…MVIH), 690 to 712 (HPCE…KLIH), 718 to 740 (HACE…MRVH), 746 to 768 (YLCA…MKLH), 774 to 796 (YECK…CKRH), 802 to 824 (FMCE…KLIH), 830 to 853 (WTCS…QLTH), and 859 to 882 (QSCQ…RRKH). Disordered regions lie at residues 922-973 (AEGK…DETN) and 1108-1141 (QTDV…MYSY). Residues 927–938 (GKAAKRSHKRKQ) are compositionally biased toward basic residues. Over residues 1121–1141 (PQQAAQPQVQAEQQQQQMYSY) the composition is skewed to low complexity.

It belongs to the class V-like SAM-binding methyltransferase superfamily. As to expression, detected in all tissues examined.

It is found in the nucleus. Sequence-specific DNA-binding transcriptional regulator. Plays a role as a molecular node in a transcriptional network regulating embryonic development and cell fate decision. Stimulates the expression of upstream key transcriptional activators and repressors of the Wnt/beta-catenin and MAPK/ERK pathways, respectively, that are essential for naive pluripotency and self-renewal maintenance of embryonic stem cells (ESCs). Specifically promotes SPRY1 and RSPO1 transcription activation through recognition and direct binding of a specific DNA sequence in their promoter regions. Involved in early embryo development. Also plays a role in induced pluripotent stem cells (iPSCs) reprogramming. The chain is PR domain zinc finger protein 15 from Homo sapiens (Human).